Consider the following 108-residue polypeptide: Alkyltransferase-like protein 1 (108 aa).

Belongs to the MGMT family. ATL subfamily.

Its function is as follows. Involved in DNA damage recognition. Binds DNA containing O(6)-methylguanine and larger O(6)-alkylguanine adducts. The DNA is bent, the damaged base is rotated out of the DNA duplex into a hydrophobic binding pocket (nucleotide flipping), with Arg-39 donating a hydrogen bond to the orphaned cytosine to stabilize the extrahelical DNA conformation. This structural change in DNA presents the lesion to the nucleotide excision repair (NER) pathway. The affinity for O(6)-alkylguanine adducts increases with the size of the alkyl group. Low affinity small O(6)-alkylguanines are directed to the global genome repair pathway of NER via rhp7-rhp16 and rhp41-rhp23, while strong binding to bulky O(6)-alkylguanines stalls the transcription machinery and diverts the damage to the transcription-coupled repair pathway of NER via rhp26. In Schizosaccharomyces pombe (strain 972 / ATCC 24843) (Fission yeast), this protein is Alkyltransferase-like protein 1.